The following is a 307-amino-acid chain: Ribonuclease Z (307 aa).

7 residues coordinate Zn(2+): His62, His64, Asp66, His67, His139, Asp210, and His268. The Proton acceptor role is filled by Asp66.

The protein belongs to the RNase Z family. In terms of assembly, homodimer. The cofactor is Zn(2+).

It catalyses the reaction Endonucleolytic cleavage of RNA, removing extra 3' nucleotides from tRNA precursor, generating 3' termini of tRNAs. A 3'-hydroxy group is left at the tRNA terminus and a 5'-phosphoryl group is left at the trailer molecule.. Its function is as follows. Zinc phosphodiesterase, which displays some tRNA 3'-processing endonuclease activity. Probably involved in tRNA maturation, by removing a 3'-trailer from precursor tRNA. The sequence is that of Ribonuclease Z from Myxococcus xanthus (strain DK1622).